The following is a 621-amino-acid chain: MPSTSKRPTAIVIGSGVGGVSTAARLARAGFHVTVLEKNNFTGGRCSLIHHEGYRFDQGPSLLLLPGLFHRTFAELGTSLEQEGVKLLKCEPNYMIHFSDGEKFTLSSDLSVMKTEVEKWEGKEGYTRYLEFLKESHGHYELSVREVLLRNFEGLTAMLRPEFLRHLLQLHPFESIWTRAGKYFWTERLRRVFTFGSMYMGMSPFDAPGTYSLLQYTELAEGIWYPVGGFHRVVEALVKIGEREGVDFRMETAVKKILLSEDGGVAKGVELEDGRRLEADVVVNNSDLVYAYEKLLPIKTPYAESLKGRPGSCSSISFYWALDRQVPELEAHNIFLADEYRESFDSIFKKHLIPDEPSFYVNVPSRVDSTAAPEGKDSVVVLVPVGHLLEEDRHASQAHQLSASRNGHISSASPPDQPGLTPTEKQDWPAMISLARKTILSTIQSRTNVDLTPLIIHESTNSPLSWKQTFNLDRGAILGLSHSFFNVLCFRPTTRARKPGAFDAQLLKFGVLGRAAEVIIDAFRGRGKDIKGLYMVGASAHPGTGVPICLAGGALVAEQICGDYGVDIPWKEEERKGRDVGGKRKLDVLESPMWLDSWEQWVSVLIYLLVGIFAWLWMKFR.

The N-terminal stretch at 1-23 (MPSTSKRPTAIVIGSGVGGVSTA) is a signal peptide. Positions 394 to 425 (HASQAHQLSASRNGHISSASPPDQPGLTPTEK) are disordered. Polar residues predominate over residues 397-414 (QAHQLSASRNGHISSASP). Residues 598–618 (WEQWVSVLIYLLVGIFAWLWM) traverse the membrane as a helical segment.

The protein belongs to the carotenoid/retinoid oxidoreductase family. NAD(+) is required as a cofactor.

It is found in the membrane. The enzyme catalyses 15-cis-phytoene + 5 A = all-trans-3,4-didehydrolycopene + 5 AH2. Its pathway is carotenoid biosynthesis; lycopene biosynthesis. Phytoene desaturase involved in the carotenoid biosynthesis pathway. Converts phytoene into 3,4-didehydrolycopene via the intermediary of phytofluene, zeta-carotene, neurosporene and lycopene, by introducing up to five double bonds into phytoene. The chain is Phytoene desaturase (PDH1) from Cercospora nicotianae (Barn spot disease fungus).